Reading from the N-terminus, the 394-residue chain is Elongation factor Tu-A (394 aa).

The tr-type G domain occupies 10 to 204 (KPHVNVGTIG…ALDTYIPEPE (195 aa)). Positions 19-26 (GHVDHGKT) are G1. 19–26 (GHVDHGKT) is a binding site for GTP. T26 lines the Mg(2+) pocket. The tract at residues 60–64 (GITIN) is G2. Residues 81-84 (DCPG) form a G3 region. GTP-binding positions include 81-85 (DCPGH) and 136-139 (NKCD). The G4 stretch occupies residues 136-139 (NKCD). Positions 174–176 (SAL) are G5.

The protein belongs to the TRAFAC class translation factor GTPase superfamily. Classic translation factor GTPase family. EF-Tu/EF-1A subfamily. As to quaternary structure, monomer.

The protein localises to the cytoplasm. It carries out the reaction GTP + H2O = GDP + phosphate + H(+). In terms of biological role, GTP hydrolase that promotes the GTP-dependent binding of aminoacyl-tRNA to the A-site of ribosomes during protein biosynthesis. The protein is Elongation factor Tu-A of Vibrio cholerae serotype O1 (strain ATCC 39315 / El Tor Inaba N16961).